The sequence spans 663 residues: Transketolase 1 (663 aa).

Position 26 (histidine 26) interacts with substrate. Lysine 46 bears the N6-acetyllysine mark. Thiamine diphosphate-binding positions include histidine 66 and glycine 114–leucine 116. Residue aspartate 155 participates in Mg(2+) binding. Glycine 156 and asparagine 185 together coordinate thiamine diphosphate. The Mg(2+) site is built by asparagine 185 and isoleucine 187. 3 residues coordinate substrate: histidine 261, arginine 358, and serine 385. Position 261 (histidine 261) interacts with thiamine diphosphate. Residue glutamate 411 is the Proton donor of the active site. Phenylalanine 437 provides a ligand contact to thiamine diphosphate. Substrate is bound by residues histidine 461, aspartate 469, histidine 473, and arginine 520.

The protein belongs to the transketolase family. Homodimer. Mg(2+) serves as cofactor. The cofactor is Ca(2+). Mn(2+) is required as a cofactor. It depends on Co(2+) as a cofactor. Requires thiamine diphosphate as cofactor.

It carries out the reaction D-sedoheptulose 7-phosphate + D-glyceraldehyde 3-phosphate = aldehydo-D-ribose 5-phosphate + D-xylulose 5-phosphate. Functionally, catalyzes the transfer of a two-carbon ketol group from a ketose donor to an aldose acceptor, via a covalent intermediate with the cofactor thiamine pyrophosphate. Thus, catalyzes the reversible transfer of a two-carbon ketol group from sedoheptulose-7-phosphate to glyceraldehyde-3-phosphate, producing xylulose-5-phosphate and ribose-5-phosphate. In Escherichia coli (strain K12), this protein is Transketolase 1 (tktA).